The chain runs to 464 residues: Protein FAM90A24 (464 aa).

3 disordered regions span residues M1–L42, V69–A389, and H415–P437. 2 stretches are compositionally biased toward basic and acidic residues: residues G74–G89 and N97–R114. Over residues L180–L197 the composition is skewed to low complexity.

This sequence belongs to the FAM90 family.

The polypeptide is Protein FAM90A24 (Homo sapiens (Human)).